Reading from the N-terminus, the 50-residue chain is Large ribosomal subunit protein bL33 (50 aa).

Belongs to the bacterial ribosomal protein bL33 family.

In Mycoplasmopsis synoviae (strain 53) (Mycoplasma synoviae), this protein is Large ribosomal subunit protein bL33.